The sequence spans 483 residues: Ribulose bisphosphate carboxylase large chain (483 aa).

Positions 1-2 are excised as a propeptide; sequence MS. Residues Asn-123 and Thr-173 each coordinate substrate. Catalysis depends on Lys-175, which acts as the Proton acceptor. Lys-177 is a substrate binding site. Residues Lys-201, Asp-203, and Glu-204 each contribute to the Mg(2+) site. At Lys-201 the chain carries N6-carboxylysine. Ser-208 bears the Phosphoserine mark. His-294 serves as the catalytic Proton acceptor. The substrate site is built by Arg-295 and His-327. Thr-330 carries the post-translational modification Phosphothreonine. Residue Ser-379 participates in substrate binding.

This sequence belongs to the RuBisCO large chain family. Type I subfamily. As to quaternary structure, heterohexadecamer of 8 large chains and 8 small chains; disulfide-linked. The disulfide link is formed within the large subunit homodimers. Mg(2+) is required as a cofactor. In terms of processing, the disulfide bond which can form in the large chain dimeric partners within the hexadecamer appears to be associated with oxidative stress and protein turnover.

It localises to the plastid. The protein localises to the chloroplast. The enzyme catalyses 2 (2R)-3-phosphoglycerate + 2 H(+) = D-ribulose 1,5-bisphosphate + CO2 + H2O. It catalyses the reaction D-ribulose 1,5-bisphosphate + O2 = 2-phosphoglycolate + (2R)-3-phosphoglycerate + 2 H(+). RuBisCO catalyzes two reactions: the carboxylation of D-ribulose 1,5-bisphosphate, the primary event in carbon dioxide fixation, as well as the oxidative fragmentation of the pentose substrate in the photorespiration process. Both reactions occur simultaneously and in competition at the same active site. This chain is Ribulose bisphosphate carboxylase large chain, found in Aethionema cordifolium (Lebanon stonecress).